The following is a 170-amino-acid chain: Adenine phosphoribosyltransferase (170 aa).

It belongs to the purine/pyrimidine phosphoribosyltransferase family. In terms of assembly, homodimer.

The protein resides in the cytoplasm. The catalysed reaction is AMP + diphosphate = 5-phospho-alpha-D-ribose 1-diphosphate + adenine. It participates in purine metabolism; AMP biosynthesis via salvage pathway; AMP from adenine: step 1/1. Its function is as follows. Catalyzes a salvage reaction resulting in the formation of AMP, that is energically less costly than de novo synthesis. The polypeptide is Adenine phosphoribosyltransferase (Bacillus mycoides (strain KBAB4) (Bacillus weihenstephanensis)).